Reading from the N-terminus, the 268-residue chain is Tryptophan synthase alpha chain (268 aa).

Catalysis depends on proton acceptor residues Glu49 and Asp60.

This sequence belongs to the TrpA family. Tetramer of two alpha and two beta chains.

It carries out the reaction (1S,2R)-1-C-(indol-3-yl)glycerol 3-phosphate + L-serine = D-glyceraldehyde 3-phosphate + L-tryptophan + H2O. Its pathway is amino-acid biosynthesis; L-tryptophan biosynthesis; L-tryptophan from chorismate: step 5/5. Functionally, the alpha subunit is responsible for the aldol cleavage of indoleglycerol phosphate to indole and glyceraldehyde 3-phosphate. This Aliivibrio fischeri (strain MJ11) (Vibrio fischeri) protein is Tryptophan synthase alpha chain.